A 107-amino-acid chain; its full sequence is Ig kappa chain V-VI region XRPC 44 (107 aa).

A framework-1 region spans residues 1–23 (EIVLTQSPAITAASLGQKVTITC). A disulfide bridge links Cys23 with Cys87. The tract at residues 24–33 (SASSSVSYMH) is complementarity-determining-1. Positions 34–48 (WYQQKSGTSPKPWIY) are framework-2. The complementarity-determining-2 stretch occupies residues 49 to 55 (EISKLAS). Residues 56 to 87 (GVPARFSGSGSGTSYSLTISSMEAEDAAIYYC) are framework-3. A complementarity-determining-3 region spans residues 88-96 (QQWNYPLWT). Residues 97–106 (FGGGTKLEIK) are framework-4.

This is Ig kappa chain V-VI region XRPC 44 from Mus musculus (Mouse).